The following is a 297-amino-acid chain: Protein-L-isoaspartate O-methyltransferase (297 aa).

Residues 20–57 are disordered; that stretch reads RKPAPARTAGMPAVGAPGPAQAQAKARDKQPSAPTAAA. The segment covering 28 to 43 has biased composition (low complexity); the sequence is AGMPAVGAPGPAQAQA. Serine 133 is an active-site residue.

Belongs to the methyltransferase superfamily. L-isoaspartyl/D-aspartyl protein methyltransferase family.

It localises to the cytoplasm. It catalyses the reaction [protein]-L-isoaspartate + S-adenosyl-L-methionine = [protein]-L-isoaspartate alpha-methyl ester + S-adenosyl-L-homocysteine. Its function is as follows. Catalyzes the methyl esterification of L-isoaspartyl residues in peptides and proteins that result from spontaneous decomposition of normal L-aspartyl and L-asparaginyl residues. It plays a role in the repair and/or degradation of damaged proteins. This is Protein-L-isoaspartate O-methyltransferase from Cupriavidus pinatubonensis (strain JMP 134 / LMG 1197) (Cupriavidus necator (strain JMP 134)).